Here is a 275-residue protein sequence, read N- to C-terminus: Putative rhamnulose-1-phosphate aldolase (275 aa).

The active site involves glutamate 117. Residues histidine 141, histidine 143, and histidine 212 each contribute to the Zn(2+) site.

It belongs to the aldolase class II family. RhaD subfamily. Homotetramer. Zn(2+) is required as a cofactor.

The protein localises to the cytoplasm. The catalysed reaction is L-rhamnulose 1-phosphate = (S)-lactaldehyde + dihydroxyacetone phosphate. It participates in carbohydrate degradation; L-rhamnose degradation; glycerone phosphate from L-rhamnose: step 3/3. Its function is as follows. Catalyzes the reversible cleavage of L-rhamnulose-1-phosphate to dihydroxyacetone phosphate (DHAP) and L-lactaldehyde. This Salmonella typhi protein is Putative rhamnulose-1-phosphate aldolase.